The primary structure comprises 160 residues: 6,7-dimethyl-8-ribityllumazine synthase (160 aa).

5-amino-6-(D-ribitylamino)uracil contacts are provided by residues tryptophan 28, 59 to 61, and 82 to 84; these read SFE and VII. 87–88 contributes to the (2S)-2-hydroxy-3-oxobutyl phosphate binding site; sequence GT. The active-site Proton donor is histidine 90. Phenylalanine 115 provides a ligand contact to 5-amino-6-(D-ribitylamino)uracil. Arginine 129 contributes to the (2S)-2-hydroxy-3-oxobutyl phosphate binding site.

It belongs to the DMRL synthase family.

The catalysed reaction is (2S)-2-hydroxy-3-oxobutyl phosphate + 5-amino-6-(D-ribitylamino)uracil = 6,7-dimethyl-8-(1-D-ribityl)lumazine + phosphate + 2 H2O + H(+). It functions in the pathway cofactor biosynthesis; riboflavin biosynthesis; riboflavin from 2-hydroxy-3-oxobutyl phosphate and 5-amino-6-(D-ribitylamino)uracil: step 1/2. In terms of biological role, catalyzes the formation of 6,7-dimethyl-8-ribityllumazine by condensation of 5-amino-6-(D-ribitylamino)uracil with 3,4-dihydroxy-2-butanone 4-phosphate. This is the penultimate step in the biosynthesis of riboflavin. This is 6,7-dimethyl-8-ribityllumazine synthase from Clavibacter michiganensis subsp. michiganensis (strain NCPPB 382).